A 587-amino-acid chain; its full sequence is Protein NRT1/ PTR FAMILY 2.9 (587 aa).

The next 12 helical transmembrane spans lie at 35–55, 65–85, 94–114, 135–155, 181–201, 209–229, 325–345, 368–388, 412–432, 457–477, 493–513, and 540–560; these read FEKL…TTVF, VVNI…FLCD, LSFA…TAVI, IGQI…AGGI, FFNW…TLIV, WSIG…IFFA, CVIR…AYIQ, IPAG…IPIY, VGAG…VEQY, GMWL…AGVG, FAGS…TFLL, and YFYF…LLVS.

This sequence belongs to the major facilitator superfamily. Proton-dependent oligopeptide transporter (POT/PTR) (TC 2.A.17) family. Expressed in roots, stems and major veins of the leaves. Detected in the companion cells of the root phloem.

It localises to the cell membrane. In terms of biological role, low-affinity nitrate transporter facilitating nitrate loading into root phloem. Not involved in dipeptides transport, but has a weak glucosinolate transport activity. The protein is Protein NRT1/ PTR FAMILY 2.9 (NPF2.9) of Arabidopsis thaliana (Mouse-ear cress).